The primary structure comprises 286 residues: Pyridoxine 4-dehydrogenase (286 aa).

Tyrosine 59 (proton donor) is an active-site residue. 210–218 (FPLGGFTPL) serves as a coordination point for NADP(+).

This sequence belongs to the aldo/keto reductase family. Aldo/keto reductase 2 subfamily.

It carries out the reaction pyridoxine + NADP(+) = pyridoxal + NADPH + H(+). The catalysed reaction is pyridoxine + NAD(+) = pyridoxal + NADH + H(+). Functionally, catalyzes the NAD(P)H-dependent reduction of pyridoxal to pyridoxine in vitro. Is not able to reduce 4-pyridoxate, and to oxidize pyridoxine or pyridoxamine. Has Kemp eliminase activity towards the non-physiological substrate 5-nitrobenzisoxazole, producing 4-nitro-2-cyanophenol; this activity is not considered to be physiologically relevant. The protein is Pyridoxine 4-dehydrogenase of Escherichia coli (strain K12).